Here is a 1119-residue protein sequence, read N- to C-terminus: DNA-directed RNA polymerase subunit beta (1119 aa).

It belongs to the RNA polymerase beta chain family. As to quaternary structure, the RNAP catalytic core consists of 2 alpha, 1 beta, 1 beta' and 1 omega subunit. When a sigma factor is associated with the core the holoenzyme is formed, which can initiate transcription.

It carries out the reaction RNA(n) + a ribonucleoside 5'-triphosphate = RNA(n+1) + diphosphate. In terms of biological role, DNA-dependent RNA polymerase catalyzes the transcription of DNA into RNA using the four ribonucleoside triphosphates as substrates. The sequence is that of DNA-directed RNA polymerase subunit beta from Thermus thermophilus (strain ATCC 27634 / DSM 579 / HB8).